A 402-amino-acid chain; its full sequence is Tyrosine--tRNA ligase (402 aa).

The short motif at 47–56 is the 'HIGH' region element; it reads PTAPDLHLGH. Positions 232–236 match the 'KMSKS' region motif; the sequence is KMSKS. ATP is bound at residue Lys-235. The 61-residue stretch at 341-401 folds into the S4 RNA-binding domain; it reads VGILDVLKQI…GKKRFMKLNI (61 aa).

Belongs to the class-I aminoacyl-tRNA synthetase family. TyrS type 2 subfamily. Homodimer.

The protein resides in the cytoplasm. It carries out the reaction tRNA(Tyr) + L-tyrosine + ATP = L-tyrosyl-tRNA(Tyr) + AMP + diphosphate + H(+). Catalyzes the attachment of tyrosine to tRNA(Tyr) in a two-step reaction: tyrosine is first activated by ATP to form Tyr-AMP and then transferred to the acceptor end of tRNA(Tyr). This Helicobacter pylori (strain ATCC 700392 / 26695) (Campylobacter pylori) protein is Tyrosine--tRNA ligase.